Here is a 526-residue protein sequence, read N- to C-terminus: Peptide chain release factor 3 (526 aa).

The tr-type G domain maps to 9–277; it reads DKRRTFAIIS…GIVEWAPKPL (269 aa). GTP contacts are provided by residues 18-25, 86-90, and 140-143; these read SHPDAGKT, DTPGH, and NKLD.

It belongs to the TRAFAC class translation factor GTPase superfamily. Classic translation factor GTPase family. PrfC subfamily.

The protein resides in the cytoplasm. Functionally, increases the formation of ribosomal termination complexes and stimulates activities of RF-1 and RF-2. It binds guanine nucleotides and has strong preference for UGA stop codons. It may interact directly with the ribosome. The stimulation of RF-1 and RF-2 is significantly reduced by GTP and GDP, but not by GMP. The sequence is that of Peptide chain release factor 3 from Shewanella putrefaciens (strain CN-32 / ATCC BAA-453).